The primary structure comprises 94 residues: Integration host factor subunit beta (94 aa).

Belongs to the bacterial histone-like protein family. Heterodimer of an alpha and a beta chain.

In terms of biological role, this protein is one of the two subunits of integration host factor, a specific DNA-binding protein that functions in genetic recombination as well as in transcriptional and translational control. In Edwardsiella ictaluri (strain 93-146), this protein is Integration host factor subunit beta.